The following is a 254-amino-acid chain: Leucyl/phenylalanyl-tRNA--protein transferase (254 aa).

This sequence belongs to the L/F-transferase family.

The protein localises to the cytoplasm. The catalysed reaction is N-terminal L-lysyl-[protein] + L-leucyl-tRNA(Leu) = N-terminal L-leucyl-L-lysyl-[protein] + tRNA(Leu) + H(+). It carries out the reaction N-terminal L-arginyl-[protein] + L-leucyl-tRNA(Leu) = N-terminal L-leucyl-L-arginyl-[protein] + tRNA(Leu) + H(+). It catalyses the reaction L-phenylalanyl-tRNA(Phe) + an N-terminal L-alpha-aminoacyl-[protein] = an N-terminal L-phenylalanyl-L-alpha-aminoacyl-[protein] + tRNA(Phe). In terms of biological role, functions in the N-end rule pathway of protein degradation where it conjugates Leu, Phe and, less efficiently, Met from aminoacyl-tRNAs to the N-termini of proteins containing an N-terminal arginine or lysine. The chain is Leucyl/phenylalanyl-tRNA--protein transferase from Burkholderia multivorans (strain ATCC 17616 / 249).